Reading from the N-terminus, the 389-residue chain is Acetyl-CoA:oxalate CoA-transferase (389 aa).

H237 is a catalytic residue.

Homodimer.

The enzyme catalyses oxalate + acetyl-CoA = oxalyl-CoA + acetate. Functionally, involved in the catabolism of oxalate and in the adapatation to low pH. ACOCT serves to prime the oxalate-induced acid tolerance response (ATR) cycle by producing substrate for oxalyl-CoA decarboxylase (OXC) and formyl-coenzyme A transferase (FCOCT). Catalyzes the reversible conversion of acetyl-CoA and oxalate to oxalyl-CoA and acetate. It can also use formyl-CoA and oxalate to produce oxalyl-CoA and formate with significantly reduced specific activity. The sequence is that of Acetyl-CoA:oxalate CoA-transferase (uctC) from Acetobacter aceti.